The primary structure comprises 512 residues: Polyamine oxidase 1 (512 aa).

Glu-38 and Arg-46 together coordinate FAD. The segment at 448 to 470 is disordered; it reads DRMAEPLPRGPDAAADERPPSPR. Glu-476 contributes to the FAD binding site.

Belongs to the flavin monoamine oxidase family. The cofactor is FAD.

Its subcellular location is the cytoplasm. The enzyme catalyses spermine + O2 + H2O = 3-aminopropanal + spermidine + H2O2. It catalyses the reaction N(1)-acetylspermine + O2 + H2O = 3-acetamidopropanal + spermidine + H2O2. The catalysed reaction is norspermine + O2 + H2O = norspermidine + 3-aminopropanal + H2O2. It carries out the reaction thermospermine + O2 + H2O = 3-aminopropanal + spermidine + H2O2. It participates in amine and polyamine degradation; spermine degradation. Flavoenzyme involved in polyamine back-conversion. Catalyzes the oxidation of the secondary amino group of polyamines, such as spermine and its acetyl derivatives. Substrate preference is thermospermine &gt; spermine &gt; norspermine &gt; N(1)-acetylspermine. No activity detected when putrescine or spermidine are used as substrates. Plays an important role in the regulation of polyamine intracellular concentration. The polypeptide is Polyamine oxidase 1 (Oryza sativa subsp. japonica (Rice)).